The sequence spans 530 residues: Glucocorticoid modulatory element-binding protein 2 (530 aa).

Residues 81 to 163 (EEGENLEAEI…RKIMDSGELD (83 aa)) enclose the SAND domain. C110 provides a ligand contact to Zn(2+). DNA contacts are provided by K136, K140, K143, and R154. A Glycyl lysine isopeptide (Lys-Gly) (interchain with G-Cter in SUMO1); alternate cross-link involves residue K155. Residue K155 forms a Glycyl lysine isopeptide (Lys-Gly) (interchain with G-Cter in SUMO2); alternate linkage. Positions 167, 171, and 175 each coordinate Zn(2+). 2 coiled-coil regions span residues 245 to 270 (LLDEVIQEFQQELEETMKGLQQRVQD) and 304 to 344 (QMDR…SNVL). A Phosphoserine modification is found at S373.

As to quaternary structure, homodimer, and heterodimer of GMEB1 and GMEB2. Interacts with the glucocorticoid receptor (NR3C1). May interact with CREB-binding protein (CBP).

It is found in the nucleus. It localises to the cytoplasm. Trans-acting factor that binds to glucocorticoid modulatory elements (GME) present in the TAT (tyrosine aminotransferase) promoter and increases sensitivity to low concentrations of glucocorticoids. Also binds to the transferrin receptor promoter. The sequence is that of Glucocorticoid modulatory element-binding protein 2 (Gmeb2) from Mus musculus (Mouse).